Consider the following 370-residue polypeptide: Glutamate 5-kinase (370 aa).

Residue Lys-13 participates in ATP binding. Ser-52, Asp-139, and Asn-151 together coordinate substrate. Residues 171–172 (SD) and 211–217 (SGGMKSK) each bind ATP. The region spanning 275–353 (KGELVLDRGA…AEIEAVLGYR (79 aa)) is the PUA domain.

It belongs to the glutamate 5-kinase family.

It localises to the cytoplasm. The enzyme catalyses L-glutamate + ATP = L-glutamyl 5-phosphate + ADP. Its pathway is amino-acid biosynthesis; L-proline biosynthesis; L-glutamate 5-semialdehyde from L-glutamate: step 1/2. Catalyzes the transfer of a phosphate group to glutamate to form L-glutamate 5-phosphate. The chain is Glutamate 5-kinase from Thermus thermophilus (strain ATCC BAA-163 / DSM 7039 / HB27).